A 414-amino-acid polypeptide reads, in one-letter code: Multidrug resistance protein MdtG (414 aa).

A run of 10 helical transmembrane segments spans residues 14–34, 56–76, 89–109, 113–133, 144–164, 171–191, 219–239, 254–274, 288–308, and 376–396; these read LFVTWLGCFLTGAAFSLIMPF, LVFSITFLFSAIAAPFWGSLA, ALGMGIVMVLMGMAQNIWQFL, ALLGLLGGFIPNANALIATQV, TLSTGGVSGALIGPLIGGLLA, PVFFITAAVLFACFVMTWFYV, ILSLFVTTMIIQIATGSIAPI, LAFVSGMIASVPGVAALISAP, ILIAMLALSVLILIPMAFVQT, and AVFCVTAVVVLFNALYSYWCL.

The protein belongs to the major facilitator superfamily. DHA1 family. MdtG (TC 2.A.1.2.20) subfamily.

Its subcellular location is the cell inner membrane. This is Multidrug resistance protein MdtG from Yersinia enterocolitica serotype O:8 / biotype 1B (strain NCTC 13174 / 8081).